Here is a 307-residue protein sequence, read N- to C-terminus: Protein YIF1A (307 aa).

Positions 1-42 (MNFQQQGYRATKPRARASPPTGGPMLFDDTSSGPPPMNNQNY) are disordered. The Cytoplasmic segment spans residues 1 to 148 (MNFQQQGYRA…TPRHDVNAPD (148 aa)). The chain crosses the membrane as a helical span at residues 149 to 169 (LYIPTMAFITYILLAGMALGI). Topologically, residues 170 to 184 (QKRFSPEVLGLCAST) are lumenal. A helical transmembrane segment spans residues 185–205 (ALVWMIIEVLVMLLSLYLLTV). The Cytoplasmic segment spans residues 206-213 (HTDLSTFD). The helical transmembrane segment at 214 to 236 (LVAYSGYKYVGMILTVFCGLLFG) threads the bilayer. At 237–239 (SDG) the chain is on the lumenal side. The helical transmembrane segment at 240–259 (YYVALAWSSCALMFFIVRSL) threads the bilayer. At 260–285 (KMKILSSISADSMGAGASAKPRFRLY) the chain is on the cytoplasmic side. The helical transmembrane segment at 286–306 (ITVASAAFQPFIIYWLTAHLV) threads the bilayer.

It belongs to the YIF1 family.

The protein resides in the endoplasmic reticulum membrane. The protein localises to the golgi apparatus membrane. It localises to the endoplasmic reticulum-Golgi intermediate compartment membrane. In terms of biological role, possible role in transport between endoplasmic reticulum and Golgi. The sequence is that of Protein YIF1A (yif1a) from Danio rerio (Zebrafish).